Here is a 374-residue protein sequence, read N- to C-terminus: MSKRDFYEILGVSKTADNKEVKRAYRKLAMKYHPDRNSDDPDAEDKFKEASMAYEVLSSEEKRSAYDRMGHAAFENGMGGGGGGGNFQDIFGDIFGNFGDIFGQSRGGGGGRSRRGSDLRYVIELTLEEAVRGCKKEISFTAPAPCDTCDGKGAKNASDIVTCQTCHGQGQVRMQQGFFAVQQACPHCGGTGKQIKNPCSDCHGNGVKDKSRTLEVSIPAGVDDGDRVRLSGEGEAGGAGVQNGDLYVEVRVKPHNVFTRQGADLYMDVPISITDAALGKEVEIPTLDGKVKIKVAEGTQSGKLLRVRGRGVTPVRTTMKGDLICRVVIETPVNLTREQKDLLRQFQDTLDGDSKHQQSPHKKSFFKKIGDLFD.

Positions 5–70 (DFYEILGVSK…EKRSAYDRMG (66 aa)) constitute a J domain. The segment at 133–211 (GCKKEISFTA…CHGNGVKDKS (79 aa)) adopts a CR-type zinc-finger fold. 8 residues coordinate Zn(2+): Cys-146, Cys-149, Cys-163, Cys-166, Cys-185, Cys-188, Cys-199, and Cys-202. CXXCXGXG motif repeat units follow at residues 146-153 (CDTCDGKG), 163-170 (CQTCHGQG), 185-192 (CPHCGGTG), and 199-206 (CSDCHGNG).

Belongs to the DnaJ family. Homodimer. The cofactor is Zn(2+).

The protein resides in the cytoplasm. In terms of biological role, participates actively in the response to hyperosmotic and heat shock by preventing the aggregation of stress-denatured proteins and by disaggregating proteins, also in an autonomous, DnaK-independent fashion. Unfolded proteins bind initially to DnaJ; upon interaction with the DnaJ-bound protein, DnaK hydrolyzes its bound ATP, resulting in the formation of a stable complex. GrpE releases ADP from DnaK; ATP binding to DnaK triggers the release of the substrate protein, thus completing the reaction cycle. Several rounds of ATP-dependent interactions between DnaJ, DnaK and GrpE are required for fully efficient folding. Also involved, together with DnaK and GrpE, in the DNA replication of plasmids through activation of initiation proteins. This Psychrobacter arcticus (strain DSM 17307 / VKM B-2377 / 273-4) protein is Chaperone protein DnaJ.